A 301-amino-acid polypeptide reads, in one-letter code: Nucleotide-binding protein Rfer_1653 (301 aa).

15–22 (GMSGSGKS) contacts ATP. Residue 64–67 (DVRT) participates in GTP binding.

This sequence belongs to the RapZ-like family.

In terms of biological role, displays ATPase and GTPase activities. This is Nucleotide-binding protein Rfer_1653 from Albidiferax ferrireducens (strain ATCC BAA-621 / DSM 15236 / T118) (Rhodoferax ferrireducens).